Reading from the N-terminus, the 59-residue chain is Large ribosomal subunit protein bL32 (59 aa).

Positions 1–23 are disordered; the sequence is MAVQQNKKSPSKRGMHRSHDFLT.

This sequence belongs to the bacterial ribosomal protein bL32 family.

The polypeptide is Large ribosomal subunit protein bL32 (Burkholderia multivorans (strain ATCC 17616 / 249)).